Consider the following 154-residue polypeptide: Transcription antitermination protein NusB (154 aa).

The protein belongs to the NusB family.

Its function is as follows. Involved in transcription antitermination. Required for transcription of ribosomal RNA (rRNA) genes. Binds specifically to the boxA antiterminator sequence of the ribosomal RNA (rrn) operons. The protein is Transcription antitermination protein NusB of Methylobacillus flagellatus (strain ATCC 51484 / DSM 6875 / VKM B-1610 / KT).